We begin with the raw amino-acid sequence, 188 residues long: Mediator of RNA polymerase II transcription subunit 29 (188 aa).

Over residues 1–11 (MAMLLNQSQPP) the composition is skewed to polar residues. The tract at residues 1–27 (MAMLLNQSQPPQGREGGGTQVGSLGPG) is disordered.

It belongs to the Mediator complex subunit 29 family. In terms of assembly, component of the Mediator complex.

It localises to the nucleus. Functionally, component of the Mediator complex, a coactivator involved in the regulated transcription of nearly all RNA polymerase II-dependent genes. Mediator functions as a bridge to convey information from gene-specific regulatory proteins to the basal RNA polymerase II transcription machinery. Mediator is recruited to promoters by direct interactions with regulatory proteins and serves as a scaffold for the assembly of a functional preinitiation complex with RNA polymerase II and the general transcription factors. The chain is Mediator of RNA polymerase II transcription subunit 29 (med29) from Xenopus tropicalis (Western clawed frog).